A 318-amino-acid polypeptide reads, in one-letter code: Mitochondrial coenzyme A transporter SLC25A42 (318 aa).

Solcar repeat units lie at residues 31 to 117, 129 to 214, and 224 to 312; these read RQVL…YKRI, LPPW…LKSL, and PYPF…MQIL. The next 6 membrane-spanning stretches (helical) occupy residues 33 to 53, 89 to 109, 135 to 155, 186 to 206, 230 to 250, and 293 to 313; these read VLSSLLSGALAGALAKTAVAP, LWRGNSATMVRVIPYAAIQFS, LLAGALAGTTAASLTYPLDLV, LYFGFTPTVLGVIPYAGLSFF, MVFGACAGLIGQSASYPLDVV, and LKGPIAVGISFTTFDLMQILL.

The protein belongs to the mitochondrial carrier (TC 2.A.29) family.

The protein resides in the mitochondrion inner membrane. It catalyses the reaction ADP(out) + CoA(in) = ADP(in) + CoA(out). The catalysed reaction is 3'-dephospho-CoA(in) + ADP(out) = 3'-dephospho-CoA(out) + ADP(in). The enzyme catalyses adenosine 3',5'-bisphosphate(in) + ADP(out) = adenosine 3',5'-bisphosphate(out) + ADP(in). It carries out the reaction AMP(in) + ADP(out) = AMP(out) + ADP(in). It catalyses the reaction dADP(in) + ADP(out) = dADP(out) + ADP(in). The catalysed reaction is ADP(in) + ATP(out) = ADP(out) + ATP(in). Mitochondrial carrier mediating the transport of coenzyme A (CoA) in mitochondria in exchange for intramitochondrial (deoxy)adenine nucleotides and adenosine 3',5'-diphosphate. This Mus musculus (Mouse) protein is Mitochondrial coenzyme A transporter SLC25A42 (Slc25a42).